Reading from the N-terminus, the 458-residue chain is tRNA modification GTPase MnmE (458 aa).

3 residues coordinate (6S)-5-formyl-5,6,7,8-tetrahydrofolate: arginine 22, glutamate 85, and arginine 124. The region spanning 220-379 (GIKTVIVGRP…LEEHISELVF (160 aa)) is the TrmE-type G domain. K(+) is bound at residue asparagine 230. GTP-binding positions include 230-235 (NVGKSS), 249-255 (TEIPGTT), and 274-277 (DTAG). Serine 234 is a binding site for Mg(2+). Positions 249, 251, and 254 each coordinate K(+). Threonine 255 serves as a coordination point for Mg(2+). Lysine 458 lines the (6S)-5-formyl-5,6,7,8-tetrahydrofolate pocket.

It belongs to the TRAFAC class TrmE-Era-EngA-EngB-Septin-like GTPase superfamily. TrmE GTPase family. In terms of assembly, homodimer. Heterotetramer of two MnmE and two MnmG subunits. K(+) is required as a cofactor.

The protein resides in the cytoplasm. Functionally, exhibits a very high intrinsic GTPase hydrolysis rate. Involved in the addition of a carboxymethylaminomethyl (cmnm) group at the wobble position (U34) of certain tRNAs, forming tRNA-cmnm(5)s(2)U34. The sequence is that of tRNA modification GTPase MnmE from Natranaerobius thermophilus (strain ATCC BAA-1301 / DSM 18059 / JW/NM-WN-LF).